The following is a 560-amino-acid chain: Hemocyanin, units G and H (560 aa).

Cysteines 1 and 11 form a disulfide. Residues 1 to 184 (CPTPDAPQYA…AKGLVSQHIE (184 aa)) are unit G. Positions 12–14 (CLH) form a cross-link, 2'-(S-cysteinyl)-histidine (Cys-His). A disulfide bridge links C93 with C98. N-linked (GlcNAc...) asparagine glycosylation occurs at N142. Residues 185 to 560 (DHDTETLIRK…KPGTGTQLTR (376 aa)) are unit H. H230 serves as a coordination point for Cu cation. A disulfide bond links C236 and C246. N240 carries an N-linked (GlcNAc...) asparagine glycan. The segment at residues 247–249 (CQH) is a cross-link (2'-(S-cysteinyl)-histidine (Cys-His)). Cu cation contacts are provided by H249, H258, H358, H362, and H389. 2 disulfides stabilise this stretch: C348-C415 and C476-C482.

It belongs to the tyrosinase family. Hemocyanin subfamily. In terms of assembly, decamers of large identical subunits (390 kDa), each containing 8 globular oxygen-binding functional units. The cofactor is Cu(2+).

Functionally, hemocyanins are copper-containing oxygen carriers occurring freely dissolved in the hemolymph of many mollusks and arthropods. The protein is Hemocyanin, units G and H of Sepia officinalis (Common cuttlefish).